Here is a 354-residue protein sequence, read N- to C-terminus: Stearoyl-CoA desaturase (354 aa).

Residues 1 to 28 (MPGHLLQEEMTSSYTTTTTTITEPPSES) form a disordered region. Residues 1–67 (MPGHLLQEEM…EGPPPKLEYV (67 aa)) are Cytoplasmic-facing. A compositionally biased stretch (low complexity) spans 8–28 (EEMTSSYTTTTTTITEPPSES). The chain crosses the membrane as a helical span at residues 68–88 (WRNIILMALLHLGALYGLVLV). Asn70 is a binding site for substrate. At 89 to 92 (PSSK) the chain is on the lumenal side. A helical membrane pass occupies residues 93–113 (VYTLLWAFVYYVISIEGIGAG). The Cytoplasmic portion of the chain corresponds to 114–212 (VHRLWSHRTY…EKLVMFQRRY (99 aa)). Fe cation-binding residues include His115 and His120. The Histidine box-1 signature appears at 115–120 (HRLWSH). Substrate contacts are provided by Asn143, Arg150, and Asp151. His152, His155, and His156 together coordinate Fe cation. A Histidine box-2 motif is present at residues 152 to 156 (HRAHH). Arg183 and Lys184 together coordinate substrate. Phosphoserine is present on Ser198. The chain crosses the membrane as a helical span at residues 213–232 (YKPAILLMCFILPTFVPWYF). Residues 233–236 (WGEA) lie on the Lumenal side of the membrane. Residues 237-258 (FVNSLCVSTFLRYTLVLNATWL) traverse the membrane as a helical segment. A substrate-binding site is contributed by Trp257. Over 259–354 (VNSAAHLYGY…RTGDGSCKSG (96 aa)) the chain is Cytoplasmic. His264, His293, His296, and His297 together coordinate Fe cation. The short motif at 293–297 (HNYHH) is the Histidine box-3 element.

It belongs to the fatty acid desaturase type 1 family. Fe(2+) serves as cofactor.

Its subcellular location is the endoplasmic reticulum membrane. It catalyses the reaction octadecanoyl-CoA + 2 Fe(II)-[cytochrome b5] + O2 + 2 H(+) = (9Z)-octadecenoyl-CoA + 2 Fe(III)-[cytochrome b5] + 2 H2O. It carries out the reaction hexadecanoyl-CoA + 2 Fe(II)-[cytochrome b5] + O2 + 2 H(+) = (9Z)-hexadecenoyl-CoA + 2 Fe(III)-[cytochrome b5] + 2 H2O. Stearoyl-CoA desaturase that utilizes O(2) and electrons from reduced cytochrome b5 to introduce the first double bond into saturated fatty acyl-CoA substrates. Catalyzes the insertion of a cis double bond at the delta-9 position into fatty acyl-CoA substrates including palmitoyl-CoA and stearoyl-CoA. Gives rise to a mixture of 16:1 and 18:1 unsaturated fatty acids. Plays an important role in lipid biosynthesis. Plays an important role in regulating the expression of genes that are involved in lipogenesis and in regulating mitochondrial fatty acid oxidation. Plays an important role in body energy homeostasis. Contributes to the biosynthesis of membrane phospholipids, cholesterol esters and triglycerides. This is Stearoyl-CoA desaturase (SCD) from Mesocricetus auratus (Golden hamster).